We begin with the raw amino-acid sequence, 142 residues long: Protein tost-1 (142 aa).

The segment at 97–123 is disordered; sequence KVFEEEDKENAPTKKAVLKPSSTDEKK.

Component of the tost-1 variant of the PETISCO complex (also called the pid-3, erh-2, tofu-6, and ife-3 small RNA complex) containing at least tost-1, tofu-6, ife-3, pid-3, and erh-2, which plays an essential role in embryogenesis. Within the complex interacts with erh-2. Within the complex interacts with pid-3 and tofu-6. In contrast to the pid-1 variant of the PETISCO complex, the tost-1 variant of the PETISCO complex plays a minor role in the biogenesis of a class of 21 nucleotide PIWI-interacting RNAs (piRNAs) that possess a uracil residue at the 5'-end (also called 21U-RNAs). Expressed in the germline.

The protein resides in the cytoplasm. It is found in the nucleus. Component of the tost-1 variant of the PETISCO complex which plays an essential role in embryogenesis. Within the complex acts as an adapter which binds to the complex via erh-2. Does not seem to play a role in the biogenesis of a class of 21 nucleotide PIWI-interacting RNAs (piRNAs) that possess a uracil residue at the 5'-end (also called 21U-RNAs). May inhibit 21U-RNA accumulation. Required for chromosome segregation and cell division in early embryos. This Caenorhabditis elegans protein is Protein tost-1.